The sequence spans 231 residues: Cell cycle transcriptional regulator CtrA (231 aa).

In terms of domain architecture, Response regulatory spans R2–V116. D51 is modified (4-aspartylphosphate). The segment at residues Q124–D223 is a DNA-binding region (ompR/PhoB-type).

Phosphorylated by CckA.

Functionally, forms part of a two-component regulatory system CtrA/CckA that controls multiple events in the cell cycle, including cell division, stalk synthesis and cell cycle-specific transcription. Binds to a group of cell cycle-regulated promoters critical for DNA replication, DNA methylation, and class II flagellar biogenesis. This is Cell cycle transcriptional regulator CtrA (ctrA) from Caulobacter vibrioides (strain ATCC 19089 / CIP 103742 / CB 15) (Caulobacter crescentus).